Reading from the N-terminus, the 348-residue chain is Large ribosomal subunit protein uL3m (348 aa).

The N-terminal 40 residues, 1-40 (MPGWRLLTQVGAQVLGRLGDGLGAALGPGNRTHIWLFVRG), are a transit peptide targeting the mitochondrion.

It belongs to the universal ribosomal protein uL3 family. In terms of assembly, component of the mitochondrial large ribosomal subunit (mt-LSU). Mature mammalian 55S mitochondrial ribosomes consist of a small (28S) and a large (39S) subunit. The 28S small subunit contains a 12S ribosomal RNA (12S mt-rRNA) and 30 different proteins. The 39S large subunit contains a 16S rRNA (16S mt-rRNA), a copy of mitochondrial valine transfer RNA (mt-tRNA(Val)), which plays an integral structural role, and 52 different proteins.

The protein resides in the mitochondrion. In Homo sapiens (Human), this protein is Large ribosomal subunit protein uL3m (MRPL3).